A 1044-amino-acid chain; its full sequence is Carbamoyl phosphate synthase large chain (1044 aa).

The segment at 1 to 398 (MPKREDISKI…ALMKAIASLD (398 aa)) is carboxyphosphate synthetic domain. ATP is bound by residues arginine 129, arginine 169, glycine 175, glycine 176, arginine 208, leucine 210, glutamate 215, glycine 241, valine 242, histidine 243, glutamine 284, and glutamate 296. Positions 133-325 (HDFLISIGER…IARIAAKIAV (193 aa)) constitute an ATP-grasp 1 domain. Mg(2+) is bound by residues glutamine 284, glutamate 296, and asparagine 298. Glutamine 284, glutamate 296, and asparagine 298 together coordinate Mn(2+). Residues 399-539 (IDLSYRLRLY…YSTYEDEDEL (141 aa)) are oligomerization domain. Positions 540-916 (PGISGFVAII…AIRKSILRDI (377 aa)) are carbamoyl phosphate synthetic domain. Positions 665–854 (SKRLEAMGID…WVELAVSAIM (190 aa)) constitute an ATP-grasp 2 domain. ATP is bound by residues arginine 701, lysine 738, leucine 740, glutamate 745, glycine 770, valine 771, histidine 772, serine 773, glutamine 813, and glutamate 825. Mg(2+) contacts are provided by glutamine 813, glutamate 825, and asparagine 827. 3 residues coordinate Mn(2+): glutamine 813, glutamate 825, and asparagine 827. One can recognise an MGS-like domain in the interval 911–1044 (SILRDIKSVF…IDYREISSYH (134 aa)). Positions 916 to 1044 (IKSVFISVRD…IDYREISSYH (129 aa)) are allosteric domain.

It belongs to the CarB family. Composed of two chains; the small (or glutamine) chain promotes the hydrolysis of glutamine to ammonia, which is used by the large (or ammonia) chain to synthesize carbamoyl phosphate. Tetramer of heterodimers (alpha,beta)4. Mg(2+) is required as a cofactor. Requires Mn(2+) as cofactor.

It carries out the reaction hydrogencarbonate + L-glutamine + 2 ATP + H2O = carbamoyl phosphate + L-glutamate + 2 ADP + phosphate + 2 H(+). The enzyme catalyses hydrogencarbonate + NH4(+) + 2 ATP = carbamoyl phosphate + 2 ADP + phosphate + 2 H(+). The protein operates within amino-acid biosynthesis; L-arginine biosynthesis; carbamoyl phosphate from bicarbonate: step 1/1. It participates in pyrimidine metabolism; UMP biosynthesis via de novo pathway; (S)-dihydroorotate from bicarbonate: step 1/3. Its function is as follows. Large subunit of the glutamine-dependent carbamoyl phosphate synthetase (CPSase). CPSase catalyzes the formation of carbamoyl phosphate from the ammonia moiety of glutamine, carbonate, and phosphate donated by ATP, constituting the first step of 2 biosynthetic pathways, one leading to arginine and/or urea and the other to pyrimidine nucleotides. The large subunit (synthetase) binds the substrates ammonia (free or transferred from glutamine from the small subunit), hydrogencarbonate and ATP and carries out an ATP-coupled ligase reaction, activating hydrogencarbonate by forming carboxy phosphate which reacts with ammonia to form carbamoyl phosphate. This Thermoplasma volcanium (strain ATCC 51530 / DSM 4299 / JCM 9571 / NBRC 15438 / GSS1) protein is Carbamoyl phosphate synthase large chain.